Reading from the N-terminus, the 140-residue chain is Transcription antitermination protein NusB (140 aa).

Belongs to the NusB family.

Involved in transcription antitermination. Required for transcription of ribosomal RNA (rRNA) genes. Binds specifically to the boxA antiterminator sequence of the ribosomal RNA (rrn) operons. The polypeptide is Transcription antitermination protein NusB (Thermoanaerobacter pseudethanolicus (strain ATCC 33223 / 39E) (Clostridium thermohydrosulfuricum)).